A 710-amino-acid chain; its full sequence is Lactoperoxidase (710 aa).

A signal peptide spans 1–22; it reads MKVLLRLPALLASLTLLQMAAS. The propeptide occupies 23-98; the sequence is TRNATRTATI…WEQSLKRLRR (76 aa). Residues Asn-25, Asn-104, and Asn-131 are each glycosylated (N-linked (GlcNAc...) asparagine). The cysteines at positions 130 and 143 are disulfide-linked. Residue Asp-223 participates in heme b binding. His-224 acts as the Proton acceptor in catalysis. Ca(2+) is bound at residue Asp-225. Asn-238 carries an N-linked (GlcNAc...) asparagine glycan. 2 disulfide bridges follow: Cys-244/Cys-254 and Cys-248/Cys-272. Ca(2+)-binding residues include Thr-299, Phe-301, Asp-303, and Ser-305. Ser-313 carries the phosphoserine modification. Asn-320 carries N-linked (GlcNAc...) asparagine glycosylation. A disulfide bridge links Cys-352 with Cys-363. Residues Glu-373 and His-466 each contribute to the heme b site. Tyr-480 bears the 3'-nitrotyrosine mark. Disulfide bonds link Cys-571/Cys-628 and Cys-669/Cys-694.

It belongs to the peroxidase family. XPO subfamily. Ca(2+) serves as cofactor. Requires heme b as cofactor. As to expression, expressed in the lacrimal gland with higher levels and 3-fold higher activity in adult females than males and secreted into tears (at protein level).

It is found in the secreted. Its subcellular location is the cytoplasm. The enzyme catalyses 2 a phenolic donor + H2O2 = 2 a phenolic radical donor + 2 H2O. It carries out the reaction thiocyanate + H2O2 + H(+) = hypothiocyanous acid + H2O. It catalyses the reaction iodide + H2O2 = hypoiodite + H2O. In terms of biological role, heme-containing oxidoreductase which catalyzes the conversion of thiocyanate (SCN(-)) into antimicrobial agent hypothiocyanous acid (OSCN(-)) in the presence of hydrogen peroxide (H2O2). Also involved in the conversion of iodide (I(-)) into hypoiodite (IO(-)) in the presence of H2O2. Responsible for the inactivation of a wide range of micro-organisms and hence, important component of defense mechanism. May be implicated in airway host defense against infection. May contribute to maintaining an appropriate H2O2 cellular level, therefore protecting cells from H2O2-caused injuries and inflammation. This Mesocricetus auratus (Golden hamster) protein is Lactoperoxidase (LPO).